The sequence spans 1014 residues: MEAALLSGFIKAILPRLFSLVNDKLNLHKGVKGDIDFLIKELRMIVGAIDDDLSVEHGAAAAAAAVQTLCMEDLRELAHGIEDCIDGVLYRAAREQRRSSSLLPRTVRATKKLLQTNQHLAQELQRLKRMVEEANQRKQRYTAAAPGQHGQVYSSAAAQVDEPWPSCSSASDPRIHEADLVGVDADRAELLEQLAERQPEQLKVIAIVGFCGLGKTALAAEAYNRETRGGRFERHAWVCAAHRSAREVLGELLRRIDAACHGDSDAGQLCVDIRQQLEKKRYFIVIDDIQTEDQWKSIKSAFPTDKDIGSRIVVTTTIQSVANACCSANGYLHKMSRLDKNCSKQLLSKKACPERYSHYKQPDSAAILKKCDGQPLALVTIGEFLQANGWPTGPNCEDLCNRLHYHLENDKTLERMRRVLVRNYTSLPGHALKACLLYFGMFPSDHPIRRKSLLRRWLAEGFVEPVSSSSNLDSTAAFDVLMDRNIIEPINVSNNDKVKTCQTYGMMREFISHMSISQNFVTFFCDDKFLPKYVRRLSLHGDTVVNGDNFNGIDLSLVRSLVVFGEAGTTVLDFSKYQLLRVLDLEKCDDLNDDHLKEICNLVLLKYLSLGGNISKLPKDIAKLKDLEALDVRRSKVKIMPVEVFGLPCLIHLLGKFKLSDKVKQKTEVQEFLSKGKSNLQTLAGFASNGSEGFLHLMRYMNKLRKLKIWCTSSAGSTDWTDLREAIQQFILDEKEANIGTRSLSLHFTGCSEDAINSLKEPCYLSSLKLHGNFPQLPQFVTSLRGLKELCLSSTKFTTGLLEALSNLSYLQYLKLVADELEKFIIKVQGFPRLLCLCIVLQCPTFPVIEEGALPFLVTLQLLCKDLHGLSDIKIECFKHLQEVTLHSGVTPATRQEWVKAAKEHPNRPKVLLLKSVDTAESEHTDVDSVMEAVKSETTEYSIAPEGPEQVIDMNNKMQLDHGLESSSVLNKQNNFADQSSSKDQLHYSFNNMGLSDVSPAVSELPNGMVPSCT.

The interval M1–G182 is structured coiled coil (CC) domain. Residues R105 to A145 adopt a coiled-coil conformation. Residues E189–V466 enclose the NB-ARC domain. LRR repeat units lie at residues R484–M506, M507–L530, P531–G552, L580–L602, V603–L624, K625–L647, M701–E725, P762–L784, R785–N807, L808–R833, and L854–C877.

This sequence belongs to the disease resistance NB-LRR family. Expressed in leaves.

Its function is as follows. Probable disease resistance protein. Resistance proteins guard the plant against pathogens that contain an appropriate avirulence protein via an indirect interaction with this avirulence protein. That triggers a defense system including the hypersensitive response, which restricts the pathogen growth. At the opposite of cultivars Aichi asahi and Sasanishiki, the cultivars Nipponbare, Mokoto and Hitomebore don't recognize the effector avirulence protein AVR-Pia from M.oryzae. The protein is Disease resistance protein RGA4 of Oryza sativa subsp. japonica (Rice).